A 242-amino-acid polypeptide reads, in one-letter code: MRIYIEEDYEKMSKKAALIVASQIILNPQSVLGLATGSTPVGMYQALVEMYEKDDIDFSEVTTINLDEYYGLSKDNPQSYYSYMMENLFNYINVAKERIHIPNGMARNVVQECLGYEEQIRIAGGIDLQVLGIGANGHIGFNEPSNKLNIRTHLVDLSLETIEDNSRFFENKAEVPRQALSIGIATIMKANQIILLASGASKAEAIREMTSGHLNTQVPASVLQTHPNVSLIIDKDAARLIE.

Residue Asp-67 is the Proton acceptor; for enolization step of the active site. Asn-136 serves as the catalytic For ring-opening step. His-138 serves as the catalytic Proton acceptor; for ring-opening step. The For ring-opening step role is filled by Glu-143.

The protein belongs to the glucosamine/galactosamine-6-phosphate isomerase family. NagB subfamily.

The catalysed reaction is alpha-D-glucosamine 6-phosphate + H2O = beta-D-fructose 6-phosphate + NH4(+). Its pathway is amino-sugar metabolism; N-acetylneuraminate degradation; D-fructose 6-phosphate from N-acetylneuraminate: step 5/5. Catalyzes the reversible isomerization-deamination of glucosamine 6-phosphate (GlcN6P) to form fructose 6-phosphate (Fru6P) and ammonium ion. The protein is Glucosamine-6-phosphate deaminase of Alkaliphilus metalliredigens (strain QYMF).